Reading from the N-terminus, the 368-residue chain is E3 ubiquitin-protein ligase ATL31 (368 aa).

A signal peptide spans 1-23 (MDPIKHISLPVLVLFLLLSVSAG). A helical transmembrane segment spans residues 46 to 66 (AVVVVVVIAALFFMGFFTVYI). An RING-type; atypical zinc finger spans residues 124-166 (CAICLNEFEDDETLRLLPKCDHVFHPHCIGAWLQGHVTCPVCR). Ser-247 is subject to Phosphoserine. A disordered region spans residues 342 to 368 (NKDGEGTSSVQHIGTVGSTSGSLRLPV). Residues 347-368 (GTSSVQHIGTVGSTSGSLRLPV) show a composition bias toward polar residues.

Belongs to the RING-type zinc finger family. ATL subfamily.

It is found in the membrane. It catalyses the reaction S-ubiquitinyl-[E2 ubiquitin-conjugating enzyme]-L-cysteine + [acceptor protein]-L-lysine = [E2 ubiquitin-conjugating enzyme]-L-cysteine + N(6)-ubiquitinyl-[acceptor protein]-L-lysine.. The protein operates within protein modification; protein ubiquitination. Functionally, E3 ubiquitin-protein ligase that is required for the plant C/N response during seedling growth transition. May be involved in the early steps of the plant defense signaling pathway. The polypeptide is E3 ubiquitin-protein ligase ATL31 (ATL31) (Arabidopsis thaliana (Mouse-ear cress)).